A 582-amino-acid chain; its full sequence is MPQIGLVSAVNLRVQGNSAYLWSSRSSLGTDSQDGCSQRNSLCFGGSDSMSHRLKIRNPHSITRRLAKDFRPLKVVCIDYPRPELDNTVNYLEAAFLSSSFRSSPRPTKPLEIVIAGAGLGGLSTAKYLADAGHKPILLEARDVLGGKVAAWKDDDGDWYETGLHIFFGAYPNMQNLFGELGINDRLQWKEHSMIFAMPNKPGEFSRFDFPEALPAPLNGILAILKNNEMLTWPEKVKFAIGLLPAMLGGQSYVEAQDGISVKDWMRKQGVPDRVTDEVFIAMSKALNFINPDELSMQCILIALNRFLQEKHGSKMAFLDGNPPERLCMPIVEHIESKGGQVRLNSRIKKIELNEDGSVKCFILNDGSTIEGDAFVFATPVDIFKLLLPEDWKEIPYFQKLEKLVGVPVINVHIWFDRKLKNTSDNLLFSRSPLLSVYADMSVTCKEYYDPNKSMLELVFAPAEEWVSRSDSEIIDATMKELAKLFPDEISADQSKAKILKYHVVKTPRSVYKTVPGCEPCRLLQRSPVEGFYLAGDYTKQKYLASMEGAVLSGKLCAQAIVQDYELLVGRSQRKLAETSVV.

The N-terminal 110 residues, 1 to 110 (MPQIGLVSAV…FRSSPRPTKP (110 aa)), are a transit peptide targeting the chloroplast and chromoplast. Residues 140-141 (EA), lysine 148, 165-166 (HI), and tyrosine 171 contribute to the FAD site. Arginine 306 serves as a coordination point for substrate. FAD contacts are provided by isoleucine 348 and aspartate 537. Substrate is bound at residue alanine 545. FAD is bound at residue methionine 547.

Belongs to the carotenoid/retinoid oxidoreductase family. As to quaternary structure, homotetramer. It depends on FAD as a cofactor.

The protein resides in the plastid. It localises to the chloroplast. The protein localises to the chromoplast. Its subcellular location is the membrane. The enzyme catalyses 2 a plastoquinone + 15-cis-phytoene = 9,9',15-tri-cis-zeta-carotene + 2 a plastoquinol. It participates in carotenoid biosynthesis; lycopene biosynthesis. Its activity is regulated as follows. Inhibited by the herbicides metflurazon, difunone, fluridone and diflufenican. Converts phytoene into zeta-carotene via the intermediary of phytofluene by the symmetrical introduction of two double bonds at the C-11 and C-11' positions of phytoene with a concomitant isomerization of two neighboring double bonds at the C9 and C9' positions from trans to cis. The sequence is that of 15-cis-phytoene desaturase, chloroplastic/chromoplastic (PDS) from Capsicum annuum (Capsicum pepper).